Reading from the N-terminus, the 187-residue chain is dCTP deaminase (187 aa).

DCTP-binding positions include K110 to R115, T134 to E136, Q155, Y169, and Q179. E136 functions as the Proton donor/acceptor in the catalytic mechanism.

This sequence belongs to the dCTP deaminase family. Homotrimer.

It catalyses the reaction dCTP + H2O + H(+) = dUTP + NH4(+). Its pathway is pyrimidine metabolism; dUMP biosynthesis; dUMP from dCTP (dUTP route): step 1/2. In terms of biological role, catalyzes the deamination of dCTP to dUTP. This Bordetella bronchiseptica (strain ATCC BAA-588 / NCTC 13252 / RB50) (Alcaligenes bronchisepticus) protein is dCTP deaminase.